The chain runs to 323 residues: Elongation factor P--(R)-beta-lysine ligase (323 aa).

Ser74–Glu76 is a substrate binding site. Residues Arg98–Glu100 and Asn107 contribute to the ATP site. Tyr116 lines the substrate pocket. Glu242–Leu243 is a binding site for ATP. Position 249 (Glu249) interacts with substrate. Gly298 lines the ATP pocket.

Belongs to the class-II aminoacyl-tRNA synthetase family. EpmA subfamily. As to quaternary structure, homodimer.

It carries out the reaction D-beta-lysine + L-lysyl-[protein] + ATP = N(6)-((3R)-3,6-diaminohexanoyl)-L-lysyl-[protein] + AMP + diphosphate + H(+). Its function is as follows. With EpmB is involved in the beta-lysylation step of the post-translational modification of translation elongation factor P (EF-P). Catalyzes the ATP-dependent activation of (R)-beta-lysine produced by EpmB, forming a lysyl-adenylate, from which the beta-lysyl moiety is then transferred to the epsilon-amino group of a conserved specific lysine residue in EF-P. This Photobacterium profundum (strain SS9) protein is Elongation factor P--(R)-beta-lysine ligase.